The chain runs to 380 residues: Set1 complex component swd3 (380 aa).

WD repeat units lie at residues 52-91 (GHEKSVTCVSVSPNKRWIATSSSDGTIKIWSALTFRLECT), 94-133 (GHYRGISQVKWATGSKYLASASDDKTIRIWDFEKRCSVRC), 136-177 (GHTN…RMLP), 179-219 (HSEP…KTLV), 221-262 (PINV…RIFD), 291-330 (NDSSYPDDAESFMHDAYLLIPSEDGTIQITDPSTKIIIDD), and 335-374 (SDDPETSLLNVTSLGPFIITSGTDPYVRVWAPSLLLSKHE). Phosphoserine is present on serine 379.

In terms of assembly, component of the Set1 complex composed of ash2, sdc1, set1, shg1, spp1, swd1, swd2 and swd3.

It is found in the nucleus. The Set1 complex specifically methylates 'Lys-4' of histone H3. The chain is Set1 complex component swd3 from Schizosaccharomyces pombe (strain 972 / ATCC 24843) (Fission yeast).